We begin with the raw amino-acid sequence, 396 residues long: Cathepsin E (396 aa).

Positions 1 to 19 (MKTLLLLLLVLLELGEAQG) are cleaved as a signal peptide. Positions 20 to 53 (SLHRVPLRRHPSLKKKLRARSQLSEFWKSHNLDM) are cleaved as a propeptide — activation peptide. One can recognise a Peptidase A1 domain in the interval 78-396 (YFGTISIGSP…NRVGLAPAVP (319 aa)). Residue asparagine 90 is glycosylated (N-linked (GlcNAc...) asparagine). The active site involves aspartate 96. Intrachain disulfides connect cysteine 109–cysteine 114 and cysteine 272–cysteine 276. Residue aspartate 281 is part of the active site. The cysteines at positions 314 and 351 are disulfide-linked.

The protein belongs to the peptidase A1 family. Homodimer; disulfide-linked. Post-translationally, glycosylated. The nature of the carbohydrate chain varies between cell types. In fibroblasts, the proenzyme contains a high mannose-type oligosaccharide, while the mature enzyme contains a complex-type oligosaccharide. In erythrocyte membranes, both the proenzyme and mature enzyme contain a complex-type oligosaccharide. In terms of processing, two forms are produced by autocatalytic cleavage, form I begins at Ile-54, form II begins at Thr-57. In terms of tissue distribution, expressed abundantly in the stomach, the Clara cells of the lung and activated B-lymphocytes, and at lower levels in lymph nodes, skin and spleen. Not expressed in resting B-lymphocytes.

The protein localises to the endosome. The catalysed reaction is Similar to cathepsin D, but slightly broader specificity.. Its function is as follows. May have a role in immune function. Probably involved in the processing of antigenic peptides during MHC class II-mediated antigen presentation. May play a role in activation-induced lymphocyte depletion in the thymus, and in neuronal degeneration and glial cell activation in the brain. In Homo sapiens (Human), this protein is Cathepsin E (CTSE).